The chain runs to 377 residues: MKRVINSCIAVLLGVAVMSAVIVLCSENPSVSLAAFFLKPFSTRGYIRALFHKAGLFVCMALGASCALKTGMINLGGDGQIYAAGFVTALLLREYWGVGFLLQWSVALLCALSVAGILACVSGILKAWLATSEMITSFLLSTACVPLIDALIITVTRDPAGNLLATAPVHSHFILQQQTSLFGVPAVLTYASLVALAVGCFFSYTRVGYQFRICGKAPEFGRFVGFPVWATYVWGMVLSGALFGLTGFFSVVGLFGTCYVGFSVGMGYAALAHALIAHAHITVLVPLAFFFAWMETASEAAVLGAHLTVNVVLFLQAAIFLLISAQWSAPWNAVRRGARRVYRFLVTVFCFRGEKHRTRRRHALSVHDTHHRRSRWE.

10 helical membrane-spanning segments follow: residues 4-24, 49-69, 72-92, 98-118, 135-155, 182-202, 223-245, 249-268, 274-294, and 303-323; these read VINS…VIVL, ALFH…CALK, MINL…ALLL, VGFL…AGIL, ITSF…IITV, FGVP…GCFF, FVGF…LFGL, FSVV…GMGY, ALIA…FAWM, and LGAH…FLLI.

The protein belongs to the binding-protein-dependent transport system permease family. The complex is probably composed of two ATP-binding proteins (RfuB), two transmembrane proteins (RfuC and RfuD) and a solute-binding protein (RfuA).

It localises to the cell inner membrane. Its function is as follows. Probably part of the ABC transporter complex RfuABCD involved in riboflavin import. Probably responsible for the translocation of the substrate across the membrane. In Treponema pallidum (strain Nichols), this protein is Probable riboflavin import permease protein RfuC.